The primary structure comprises 731 residues: Endopolyphosphatase (731 aa).

Topologically, residues 1–4 (MSLS) are cytoplasmic. Residues 5–25 (RCILGLACLWHGVIASPLGAV) form a helical; Signal-anchor for type II membrane protein membrane-spanning segment. The Vacuolar portion of the chain corresponds to 26-731 (PSNIPIATDL…VEKEDLKKFT (706 aa)). A glycan (N-linked (GlcNAc...) asparagine) is linked at Asn106. Positions 375–403 (KLQPPPTDSKNSGQLKKGKKGRKGKKKKP) are disordered. Residues 390–402 (KKGKKGRKGKKKK) show a composition bias toward basic residues. An N-linked (GlcNAc...) asparagine glycan is attached at Asn433. Residues 456–522 (EQNDRQKHLD…PPGPAYSPQP (67 aa)) form a disordered region. Basic and acidic residues-rich tracts occupy residues 457–474 (QNDR…PSHM) and 492–501 (GGDSKPKKPD). Residues 505-519 (PHPPAKSSPPGPAYS) are compositionally biased toward pro residues. Asn534 and Asn540 each carry an N-linked (GlcNAc...) asparagine glycan. Positions 626–706 (AKSIDVSYES…HKKKKGKKRQ (81 aa)) are disordered. Residues 636-686 (AAEEEEEEEEEEEEDLFEEVEETDEEEEQEDDDLSDGEEVDDDSDEDELET) show a composition bias toward acidic residues. The span at 691 to 706 (KHDKKKHKKKKGKKRQ) shows a compositional bias: basic residues.

This sequence belongs to the endopolyphosphatase PPN1 family. The cofactor is a divalent metal cation. Processing by proteases in the vacuole may be required for activation.

It is found in the vacuole membrane. It carries out the reaction [phosphate](n+1) + n H2O = (n+1) phosphate + n H(+). Its function is as follows. Catalyzes the hydrolysis of inorganic polyphosphate (polyP) chains of many hundreds of phosphate residues into shorter lengths. The chain is Endopolyphosphatase (epp-1) from Neurospora crassa (strain ATCC 24698 / 74-OR23-1A / CBS 708.71 / DSM 1257 / FGSC 987).